Reading from the N-terminus, the 119-residue chain is Fluoride-specific ion channel FluC (119 aa).

Transmembrane regions (helical) follow at residues I5–A25, I30–F50, W59–L79, and I97–A117. Positions 69 and 72 each coordinate Na(+).

It belongs to the fluoride channel Fluc/FEX (TC 1.A.43) family.

It localises to the cell inner membrane. It carries out the reaction fluoride(in) = fluoride(out). Na(+) is not transported, but it plays an essential structural role and its presence is essential for fluoride channel function. In terms of biological role, fluoride-specific ion channel. Important for reducing fluoride concentration in the cell, thus reducing its toxicity. The sequence is that of Fluoride-specific ion channel FluC from Neisseria meningitidis serogroup B (strain ATCC BAA-335 / MC58).